A 392-amino-acid polypeptide reads, in one-letter code: Flagellar P-ring protein (392 aa).

Positions 1–38 (MKPFARRALLTAEPIRALLLAASLLAATLGLMPAEAFG) are cleaved as a signal peptide.

Belongs to the FlgI family. As to quaternary structure, the basal body constitutes a major portion of the flagellar organelle and consists of four rings (L,P,S, and M) mounted on a central rod.

The protein localises to the periplasm. Its subcellular location is the bacterial flagellum basal body. In terms of biological role, assembles around the rod to form the L-ring and probably protects the motor/basal body from shearing forces during rotation. In Paramagnetospirillum magneticum (strain ATCC 700264 / AMB-1) (Magnetospirillum magneticum), this protein is Flagellar P-ring protein.